The sequence spans 126 residues: Fluoride-specific ion channel FluC 1 (126 aa).

4 helical membrane-spanning segments follow: residues 5 to 25 (FILAVAAGGSLGSVARYLVGI), 39 to 59 (TLFINITGSLLIGLFAGLFAI), 69 to 89 (IFLIVGICGGYTTFSTFSLDS), and 100 to 120 (AAGAYMIASVVLSVGALIAGI). Na(+) is bound by residues Gly-77 and Thr-80.

This sequence belongs to the fluoride channel Fluc/FEX (TC 1.A.43) family.

It localises to the cell inner membrane. It catalyses the reaction fluoride(in) = fluoride(out). Na(+) is not transported, but it plays an essential structural role and its presence is essential for fluoride channel function. In terms of biological role, fluoride-specific ion channel. Important for reducing fluoride concentration in the cell, thus reducing its toxicity. The chain is Fluoride-specific ion channel FluC 1 from Nitrobacter hamburgensis (strain DSM 10229 / NCIMB 13809 / X14).